The following is a 241-amino-acid chain: Sugar fermentation stimulation protein homolog (241 aa).

Belongs to the SfsA family.

The polypeptide is Sugar fermentation stimulation protein homolog (Trichormus variabilis (strain ATCC 29413 / PCC 7937) (Anabaena variabilis)).